Consider the following 2237-residue polypeptide: Activating signal cointegrator 1 complex subunit 3-like (2237 aa).

Disordered regions lie at residues 1–48 (MSEE…RGEM), 71–118 (TIEK…KPID), 242–330 (DEEE…SKLI), and 445–472 (EKTIEKTESNKKDVEMKQQQQQQQDEIK). The segment covering 24-37 (ERNRSELKEPKGEP) has biased composition (basic and acidic residues). The span at 79 to 97 (VNSSNDTYSTTKKVKNQNP) shows a compositional bias: polar residues. The span at 105-114 (RKSNGNNNNE) shows a compositional bias: low complexity. Positions 242-282 (DEEEEEENLSDFEIRDDDDDDDDVDNNEVDDNNNNDSEAQD) are enriched in acidic residues. 2 stretches are compositionally biased toward basic and acidic residues: residues 312 to 325 (QKPDTKNTKDDKNN) and 446 to 460 (KTIEKTESNKKDVEM). Positions 440–468 (TAATTEKTIEKTESNKKDVEMKQQQQQQQ) form a coiled coil. The Helicase ATP-binding 1 domain maps to 561 to 745 (DCAFKTDNNL…FLRVEPDGVF (185 aa)). 574–581 (APTSSGKT) contributes to the ATP binding site. The DEAH box signature appears at 687–690 (DEIH). The region spanning 755–990 (PLEQQYIGIS…TVRDAVNWLG (236 aa)) is the Helicase C-terminal 1 domain. The 307-residue stretch at 1050 to 1356 (STELGKVASH…GAEYSLPISF (307 aa)) folds into the SEC63 1 domain. Residues 1407–1584 (NCMYQSNDNA…WIGATPQTCY (178 aa)) enclose the Helicase ATP-binding 2 domain. 1420–1427 (APTNSGKT) contacts ATP. A DEAH box motif is present at residues 1526–1529 (DELH). The 176-residue stretch at 1657 to 1832 (TLTKPYLVCE…TITKKQDALD (176 aa)) folds into the Helicase C-terminal 2 domain. The SEC63 2 domain maps to 1892–2215 (PLNLGIIASY…GCDQEHELNI (324 aa)).

It belongs to the helicase family.

The sequence is that of Activating signal cointegrator 1 complex subunit 3-like (ascc3l) from Dictyostelium discoideum (Social amoeba).